The following is a 444-amino-acid chain: Type I restriction enzyme EcoDI specificity subunit (444 aa).

This sequence belongs to the type-I restriction system S methylase family. As to quaternary structure, the type I restriction/modification system is composed of three polypeptides R, M and S; the restriction enzyme has stoichiometry R(2)M(2)S(1) while the methyltransferase is M(2)S(1).

Functionally, the specificity (S) subunit of a type I restriction enzyme; this subunit dictates DNA sequence specificity. The M and S subunits together form a methyltransferase (MTase) that methylates two adenine residues of the sequence 5'-TTAN(7)GTCY-3'. In the presence of the R subunit the complex can also act as an endonuclease, binding to the same target sequence but cutting the DNA some distance from this site. Whether the DNA is cut or modified depends on the methylation state of the target sequence. When the target site is unmodified, the DNA is cut. When the target site is hemimethylated, the complex acts as a maintenance MTase modifying the DNA so that both strands become methylated. After locating a non-methylated recognition site, the enzyme complex serves as a molecular motor that translocates DNA in an ATP-dependent manner until a collision occurs that triggers cleavage. The polypeptide is Type I restriction enzyme EcoDI specificity subunit (Escherichia coli).